Here is a 373-residue protein sequence, read N- to C-terminus: Lipoyl synthase (373 aa).

The disordered stretch occupies residues 12–36 (HVVSNDHPSSSPLQPGVKQSGEDKI). [4Fe-4S] cluster-binding residues include Cys-81, Cys-86, Cys-92, Cys-107, Cys-111, Cys-114, and Ser-323. Residues 93 to 312 (FSHGTATFMI…EEYGMALGFS (220 aa)) enclose the Radical SAM core domain. The tract at residues 346-373 (PAVSSTEHRERHTIASKSASKTESIPHR) is disordered. The span at 360-373 (ASKSASKTESIPHR) shows a compositional bias: polar residues.

The protein belongs to the radical SAM superfamily. Lipoyl synthase family. Requires [4Fe-4S] cluster as cofactor.

The protein resides in the cytoplasm. It carries out the reaction [[Fe-S] cluster scaffold protein carrying a second [4Fe-4S](2+) cluster] + N(6)-octanoyl-L-lysyl-[protein] + 2 oxidized [2Fe-2S]-[ferredoxin] + 2 S-adenosyl-L-methionine + 4 H(+) = [[Fe-S] cluster scaffold protein] + N(6)-[(R)-dihydrolipoyl]-L-lysyl-[protein] + 4 Fe(3+) + 2 hydrogen sulfide + 2 5'-deoxyadenosine + 2 L-methionine + 2 reduced [2Fe-2S]-[ferredoxin]. It functions in the pathway protein modification; protein lipoylation via endogenous pathway; protein N(6)-(lipoyl)lysine from octanoyl-[acyl-carrier-protein]: step 2/2. Functionally, catalyzes the radical-mediated insertion of two sulfur atoms into the C-6 and C-8 positions of the octanoyl moiety bound to the lipoyl domains of lipoate-dependent enzymes, thereby converting the octanoylated domains into lipoylated derivatives. The protein is Lipoyl synthase of Xylella fastidiosa (strain M12).